Reading from the N-terminus, the 301-residue chain is Homoserine O-acetyltransferase (301 aa).

The active-site Acyl-thioester intermediate is cysteine 142. 2 residues coordinate substrate: lysine 163 and serine 192. The active-site Proton acceptor is histidine 235. Residue glutamate 237 is part of the active site. Residue arginine 249 coordinates substrate.

The protein belongs to the MetA family.

The protein localises to the cytoplasm. It catalyses the reaction L-homoserine + acetyl-CoA = O-acetyl-L-homoserine + CoA. The protein operates within amino-acid biosynthesis; L-methionine biosynthesis via de novo pathway; O-acetyl-L-homoserine from L-homoserine: step 1/1. Functionally, transfers an acetyl group from acetyl-CoA to L-homoserine, forming acetyl-L-homoserine. The polypeptide is Homoserine O-acetyltransferase (Bacillus subtilis (strain 168)).